The sequence spans 264 residues: S-adenosylmethionine decarboxylase proenzyme (264 aa).

The active-site Schiff-base intermediate with substrate; via pyruvic acid is serine 113. The residue at position 113 (serine 113) is a Pyruvic acid (Ser); by autocatalysis. The active-site Proton acceptor; for processing activity is histidine 118. Cysteine 141 acts as the Proton donor; for catalytic activity in catalysis.

Belongs to the prokaryotic AdoMetDC family. Type 2 subfamily. As to quaternary structure, heterooctamer of four alpha and four beta chains arranged as a tetramer of alpha/beta heterodimers. Pyruvate is required as a cofactor. In terms of processing, is synthesized initially as an inactive proenzyme. Formation of the active enzyme involves a self-maturation process in which the active site pyruvoyl group is generated from an internal serine residue via an autocatalytic post-translational modification. Two non-identical subunits are generated from the proenzyme in this reaction, and the pyruvate is formed at the N-terminus of the alpha chain, which is derived from the carboxyl end of the proenzyme. The post-translation cleavage follows an unusual pathway, termed non-hydrolytic serinolysis, in which the side chain hydroxyl group of the serine supplies its oxygen atom to form the C-terminus of the beta chain, while the remainder of the serine residue undergoes an oxidative deamination to produce ammonia and the pyruvoyl group blocking the N-terminus of the alpha chain.

The enzyme catalyses S-adenosyl-L-methionine + H(+) = S-adenosyl 3-(methylsulfanyl)propylamine + CO2. The protein operates within amine and polyamine biosynthesis; S-adenosylmethioninamine biosynthesis; S-adenosylmethioninamine from S-adenosyl-L-methionine: step 1/1. Functionally, catalyzes the decarboxylation of S-adenosylmethionine to S-adenosylmethioninamine (dcAdoMet), the propylamine donor required for the synthesis of the polyamines spermine and spermidine from the diamine putrescine. The chain is S-adenosylmethionine decarboxylase proenzyme from Pseudomonas syringae pv. tomato (strain ATCC BAA-871 / DC3000).